The primary structure comprises 119 residues: uncharacterized protein (119 aa).

This is an uncharacterized protein from Lactococcus lactis subsp. lactis (strain IL1403) (Streptococcus lactis).